Consider the following 166-residue polypeptide: Disulfide bond formation protein B (166 aa).

Residues 1–11 (MQSFAFSTRAL) are Cytoplasmic-facing. A helical transmembrane segment spans residues 12–28 (FLGLFAVCAGLLGFGLY). The Periplasmic segment spans residues 29–46 (LQHAVGLEPCPMCIMQRY). Cys-38 and Cys-41 form a disulfide bridge. Residues 47–63 (AFVAIALTALVAGLHGP) traverse the membrane as a helical segment. The Cytoplasmic portion of the chain corresponds to 64–70 (GRRGTRA). A helical transmembrane segment spans residues 71–87 (YAAVILLLALAGGGVAL). Over 88–143 (RQTWMQLYPPEFAECGPDLEFMLGSFPLADALPMIFQGAGDCSKVDWAFLGLSIAN) the chain is Periplasmic. A disulfide bond links Cys-102 and Cys-129. A helical membrane pass occupies residues 144-162 (WSLVCLTLVAVFAIMMIAR). Over 163–166 (KRGG) the chain is Cytoplasmic.

This sequence belongs to the DsbB family.

The protein resides in the cell inner membrane. In terms of biological role, required for disulfide bond formation in some periplasmic proteins. Acts by oxidizing the DsbA protein. The polypeptide is Disulfide bond formation protein B (Aromatoleum aromaticum (strain DSM 19018 / LMG 30748 / EbN1) (Azoarcus sp. (strain EbN1))).